The following is a 226-amino-acid chain: MKITVLSLFENFFNEFKNTSIIKKAIANNLVDIEIVNFRNFSKDSHNKVDDTPYGGGAGMVLTLQPIVDAINHVKTSNSKVVLLTPSGKTYNQQIANQFKTFEHLILICGHYEGFDERIINYVDYEISIGDYILTGGEIAAMAILDSVIRLIPNVISVNSLESESFDNNLLDYPNYTKPYNFNGYKVPEVLLSGNHKEINKVRKEWQINKTKINRKDLFIKYLKEN.

S-adenosyl-L-methionine is bound by residues Gly110 and 129–134 (IGDYIL).

Belongs to the RNA methyltransferase TrmD family. In terms of assembly, homodimer.

The protein resides in the cytoplasm. It catalyses the reaction guanosine(37) in tRNA + S-adenosyl-L-methionine = N(1)-methylguanosine(37) in tRNA + S-adenosyl-L-homocysteine + H(+). Specifically methylates guanosine-37 in various tRNAs. This Malacoplasma penetrans (strain HF-2) (Mycoplasma penetrans) protein is tRNA (guanine-N(1)-)-methyltransferase.